We begin with the raw amino-acid sequence, 304 residues long: MLDVCLLGTSGMMPLPGRWLTALMTRLNGSSLLIDCGEGTQIAIREKGWSFHSIDIICFTHYHGDHISGLPGLLLSMGNADRTQPVTVIGPKGLERVVSALRVIAPELPFELNFIEVTNPQETICVNDYVINAFRVNHNVICYGYTIEVKRTGRFIPEMAMQNEVPIELWSRLQKGQTIEKDSRVFTPDMILGPQRKGIKLTYCTDSRPVPQIIEQAQGSDLFICEGMYGEKEKQSNAIENKHMTFYEAAELAKQAGVKELWLTHYSPSLTRPEEYMKETKEIFPNAKAGKDRKSITLEFDKNE.

Residues His-61, His-63, Asp-65, His-66, His-138, Asp-206, and His-265 each coordinate Zn(2+). Residue Asp-65 is the Proton acceptor of the active site.

This sequence belongs to the RNase Z family. Homodimer. The cofactor is Zn(2+).

The catalysed reaction is Endonucleolytic cleavage of RNA, removing extra 3' nucleotides from tRNA precursor, generating 3' termini of tRNAs. A 3'-hydroxy group is left at the tRNA terminus and a 5'-phosphoryl group is left at the trailer molecule.. Functionally, zinc phosphodiesterase, which displays some tRNA 3'-processing endonuclease activity. Probably involved in tRNA maturation, by removing a 3'-trailer from precursor tRNA. The chain is Ribonuclease Z from Lachnoclostridium phytofermentans (strain ATCC 700394 / DSM 18823 / ISDg) (Clostridium phytofermentans).